Consider the following 130-residue polypeptide: Capsid protein (130 aa).

Positions 32–105 are viral RNA-binding; it reads EWISSNSRSQ…FATNSDCELI (74 aa).

It belongs to the Leviviricetes capsid protein family. Homodimer. The capsid proteins form dimers that assemble by group of 5. Twelve such pentamers are linked together with free dimers. The homodimers binds to the viral RNA via an operator hairpin, but also to many other RNA sequences in the viral genome; this interaction probably shifts the virus from the replicative to the assembly phase and ensures specific encapsidation of the viral genome.

The protein localises to the virion. Functionally, capsid protein self-assembles to form an icosahedral capsid with a T=3 symmetry, about 26 nm in diameter, and consisting of 89 capsid proteins dimers (178 capsid proteins). Involved in viral genome encapsidation through the interaction between a capsid protein dimer and the multiple packaging signals present in the RNA genome. The capsid also contains 1 copy of the A2 maturation protein. Acts as a translational repressor of viral replicase synthesis late in infection. This latter function is the result of capsid protein interaction with an RNA hairpin which contains the replicase ribosome-binding site. The polypeptide is Capsid protein (Enterobacteria phage ZR (Bacteriophage ZR)).